Reading from the N-terminus, the 917-residue chain is Translation initiation factor IF-2 (917 aa).

Disordered stretches follow at residues 1-84 (MSDG…GRAG) and 150-318 (KESE…DRER). The segment covering 10–27 (DGNNTPSQGGEQTRSSRL) has biased composition (polar residues). Low complexity-rich tracts occupy residues 69 to 84 (AAGP…GRAG), 154 to 177 (QQAA…AAEA), and 227 to 236 (SRPAAAAPAR). Pro residues predominate over residues 265–274 (GAPPAPPRRP). A compositionally biased stretch (basic and acidic residues) spans 282-305 (GGSDRRSGRIDVRAAIEGDDDKTR). The 171-residue stretch at 416 to 586 (PRAPVVTVMG…LLQSEMLDLK (171 aa)) folds into the tr-type G domain. Residues 425–432 (GHVDHGKT) form a G1 region. 425 to 432 (GHVDHGKT) contacts GTP. The interval 450–454 (GITQH) is G2. The G3 stretch occupies residues 472–475 (DTPG). GTP-binding positions include 472–476 (DTPGH) and 526–529 (NKID). Residues 526 to 529 (NKID) form a G4 region. The interval 562–564 (SAL) is G5.

This sequence belongs to the TRAFAC class translation factor GTPase superfamily. Classic translation factor GTPase family. IF-2 subfamily.

The protein resides in the cytoplasm. Functionally, one of the essential components for the initiation of protein synthesis. Protects formylmethionyl-tRNA from spontaneous hydrolysis and promotes its binding to the 30S ribosomal subunits. Also involved in the hydrolysis of GTP during the formation of the 70S ribosomal complex. This Gluconobacter oxydans (strain 621H) (Gluconobacter suboxydans) protein is Translation initiation factor IF-2.